Consider the following 508-residue polypeptide: Probable metalloreductase AIM14 (508 aa).

Helical transmembrane passes span 18-38 (LPYG…LIVM), 70-90 (PLLL…VAYI), 100-120 (LSYV…NPIL), 137-157 (FVTV…SLDP), 168-188 (LFNF…FASV), 198-218 (SFYV…PIHA), 222-242 (VTVP…ISYI), and 347-367 (VAIV…KYLQ). Positions 97–214 (LGRLSYVLVI…LGQWAMVFLV (118 aa)) constitute a Ferric oxidoreductase domain. One can recognise an FAD-binding FR-type domain in the interval 241–361 (YIYYSTTVNV…GGSGISFGLS (121 aa)).

It belongs to the ferric reductase (FRE) family. AIM14 subfamily.

It is found in the membrane. In terms of biological role, probable cell surface metalloreductase. May be involved in iron or copper homeostasis. This chain is Probable metalloreductase AIM14 (AIM14), found in Kluyveromyces lactis (strain ATCC 8585 / CBS 2359 / DSM 70799 / NBRC 1267 / NRRL Y-1140 / WM37) (Yeast).